A 222-amino-acid chain; its full sequence is Putative adhesin RP828 (222 aa).

Positions Met-1–Ala-22 are cleaved as a signal peptide.

In terms of biological role, adheres to biotinylated epithelial (Vero cell) proteins. In Rickettsia prowazekii (strain Madrid E), this protein is Putative adhesin RP828.